Consider the following 272-residue polypeptide: Ribosomal RNA small subunit methyltransferase A (272 aa).

6 residues coordinate S-adenosyl-L-methionine: His-13, Leu-15, Gly-40, Glu-61, Asp-85, and Asn-105.

The protein belongs to the class I-like SAM-binding methyltransferase superfamily. rRNA adenine N(6)-methyltransferase family. RsmA subfamily.

It is found in the cytoplasm. The catalysed reaction is adenosine(1518)/adenosine(1519) in 16S rRNA + 4 S-adenosyl-L-methionine = N(6)-dimethyladenosine(1518)/N(6)-dimethyladenosine(1519) in 16S rRNA + 4 S-adenosyl-L-homocysteine + 4 H(+). Functionally, specifically dimethylates two adjacent adenosines (A1518 and A1519) in the loop of a conserved hairpin near the 3'-end of 16S rRNA in the 30S particle. May play a critical role in biogenesis of 30S subunits. The polypeptide is Ribosomal RNA small subunit methyltransferase A (Bacteroides fragilis (strain ATCC 25285 / DSM 2151 / CCUG 4856 / JCM 11019 / LMG 10263 / NCTC 9343 / Onslow / VPI 2553 / EN-2)).